A 333-amino-acid polypeptide reads, in one-letter code: Catabolite control protein A (333 aa).

The 55-residue stretch at Ile-7–Ser-61 folds into the HTH lacI-type domain. Positions Ile-9–Asn-28 form a DNA-binding region, H-T-H motif.

Functionally, global transcriptional regulator of carbon catabolite repression (CCR) and carbon catabolite activation (CCA), which ensures optimal energy usage under diverse conditions. The protein is Catabolite control protein A (ccpA) of Streptococcus mutans serotype c (strain ATCC 700610 / UA159).